Here is a 484-residue protein sequence, read N- to C-terminus: tRNA sulfurtransferase (484 aa).

Residues 61-165 form the THUMP domain; sequence PLILDLLKRT…GDKMLLVEAR (105 aa). Residues 183–184, lysine 265, glycine 287, and glutamine 296 each bind ATP; that span reads LI. Cysteine 344 and cysteine 456 are joined by a disulfide. Residues 404 to 483 form the Rhodanese domain; that stretch reads LTEKDIILDI…YQNVKVFNLP (80 aa). The Cysteine persulfide intermediate role is filled by cysteine 456.

The protein belongs to the ThiI family.

It localises to the cytoplasm. It catalyses the reaction [ThiI sulfur-carrier protein]-S-sulfanyl-L-cysteine + a uridine in tRNA + 2 reduced [2Fe-2S]-[ferredoxin] + ATP + H(+) = [ThiI sulfur-carrier protein]-L-cysteine + a 4-thiouridine in tRNA + 2 oxidized [2Fe-2S]-[ferredoxin] + AMP + diphosphate. It carries out the reaction [ThiS sulfur-carrier protein]-C-terminal Gly-Gly-AMP + S-sulfanyl-L-cysteinyl-[cysteine desulfurase] + AH2 = [ThiS sulfur-carrier protein]-C-terminal-Gly-aminoethanethioate + L-cysteinyl-[cysteine desulfurase] + A + AMP + 2 H(+). It functions in the pathway cofactor biosynthesis; thiamine diphosphate biosynthesis. Functionally, catalyzes the ATP-dependent transfer of a sulfur to tRNA to produce 4-thiouridine in position 8 of tRNAs, which functions as a near-UV photosensor. Also catalyzes the transfer of sulfur to the sulfur carrier protein ThiS, forming ThiS-thiocarboxylate. This is a step in the synthesis of thiazole, in the thiamine biosynthesis pathway. The sulfur is donated as persulfide by IscS. The polypeptide is tRNA sulfurtransferase (Haemophilus ducreyi (strain 35000HP / ATCC 700724)).